The primary structure comprises 247 residues: C-X-C motif chemokine 16 (247 aa).

A signal peptide spans 1–26 (MRRGFGPLALTLFLFFFALLTLPGDG). Residues 27–198 (NQGSVAGSCY…EPGAGAGTQA (172 aa)) are Extracellular-facing. Intrachain disulfides connect Cys-35–Cys-65 and Cys-37–Cys-79. The segment at 120 to 152 (IPEATEGKPPDTSTAVQFQSTQQSTFPSGAPSL) is disordered. Residues 131 to 147 (TSTAVQFQSTQQSTFPS) are compositionally biased toward low complexity. The helical transmembrane segment at 199–219 (LVPVLSLLAIVFFLVAAMVCV) threads the bilayer. The Cytoplasmic segment spans residues 220–247 (LCNRRVTRQSSSGLQLCYTPVEPRPQGL).

It belongs to the intercrine alpha (chemokine CxC) family. In terms of processing, glycosylated.

The protein resides in the membrane. Its function is as follows. Induces a strong chemotactic response. Induces calcium mobilization. Binds to CXCR6/Bonzo. Also acts as a scavenger receptor on macrophages, which specifically binds to OxLDL (oxidized low density lipoprotein), suggesting that it may be involved in pathophysiology such as atherogenesis. This is C-X-C motif chemokine 16 (Cxcl16) from Rattus norvegicus (Rat).